A 93-amino-acid polypeptide reads, in one-letter code: Alpha-elapitoxin-Oh3a (93 aa).

An N-terminal signal peptide occupies residues 1–21 (MKTLLLTLVVVTIVCLDLGYT). Disulfide bonds link Cys24–Cys42, Cys35–Cys63, Cys48–Cys52, Cys67–Cys78, and Cys79–Cys84.

This sequence belongs to the three-finger toxin family. Long-chain subfamily. Type II alpha-neurotoxin sub-subfamily. As to expression, expressed by the venom gland.

The protein localises to the secreted. Binds to muscular and neuronal nicotinic acetylcholine receptor (nAChR) and inhibits acetylcholine from binding to the receptor, thereby impairing neuromuscular and neuronal transmission. Pseudo-irreversibly inhibits twitches in chick biventer cervicis nerve-muscle preparations in a concentration-dependent manner. The polypeptide is Alpha-elapitoxin-Oh3a (Ophiophagus hannah (King cobra)).